The primary structure comprises 272 residues: 2-amino-3,7-dideoxy-D-threo-hept-6-ulosonate synthase (272 aa).

Aspartate 33 (proton acceptor) is an active-site residue. Residues 33–37 and 153–155 each bind 1-deoxy-D-threo-hexo-2,5-diulose 6-phosphate; these read DHGVS and YPR. Tyrosine 153 acts as the Proton donor in catalysis. Lysine 184 serves as the catalytic Schiff-base intermediate with substrate. Residues 209-210 and 237-238 contribute to the 1-deoxy-D-threo-hexo-2,5-diulose 6-phosphate site; these read GG and GR.

Belongs to the DeoC/FbaB aldolase family. ADHS subfamily. Homodecamer.

The catalysed reaction is 1-deoxy-D-threo-hexo-2,5-diulose 6-phosphate + L-aspartate 4-semialdehyde = 2,3-dioxopropyl phosphate + 2-amino-2,3,7-trideoxy-D-lyxo-hept-6-ulosonate. Catalyzes a transaldol reaction between 6-deoxy-5-ketofructose 1-phosphate (DKFP) and L-aspartate semialdehyde (ASA) with an elimination of hydroxypyruvaldehyde phosphate to yield 2-amino-3,7-dideoxy-D-threo-hept-6-ulosonate (ADH). Plays a key role in an alternative pathway of the biosynthesis of 3-dehydroquinate (DHQ), which is involved in the canonical pathway for the biosynthesis of aromatic amino acids and which is also a precursor for the biosynthesis of p-aminobenzoic acid (PABA) in M.maripaludis. Does not possess fructose-bisphosphate (FBP) aldolase activity. This is 2-amino-3,7-dideoxy-D-threo-hept-6-ulosonate synthase from Methanococcus maripaludis (strain DSM 14266 / JCM 13030 / NBRC 101832 / S2 / LL).